Reading from the N-terminus, the 247-residue chain is ATP synthase subunit a, chloroplastic (247 aa).

5 consecutive transmembrane segments (helical) span residues 38–58 (QVLI…ILVV), 95–115 (VPFI…GALL), 134–154 (INTT…AGIS), 199–219 (LVVV…VMFL), and 220–240 (GLFT…AYIG).

The protein belongs to the ATPase A chain family. As to quaternary structure, F-type ATPases have 2 components, CF(1) - the catalytic core - and CF(0) - the membrane proton channel. CF(1) has five subunits: alpha(3), beta(3), gamma(1), delta(1), epsilon(1). CF(0) has four main subunits: a, b, b' and c.

The protein localises to the plastid. It is found in the chloroplast thylakoid membrane. Functionally, key component of the proton channel; it plays a direct role in the translocation of protons across the membrane. In Pisum sativum (Garden pea), this protein is ATP synthase subunit a, chloroplastic.